The following is a 315-amino-acid chain: tRNA dimethylallyltransferase (315 aa).

An ATP-binding site is contributed by Gly11–Ser18. Thr13–Ser18 contributes to the substrate binding site. Interaction with substrate tRNA stretches follow at residues Asp36–Gln39 and Gln160–Arg164.

The protein belongs to the IPP transferase family. As to quaternary structure, monomer. Mg(2+) serves as cofactor.

It catalyses the reaction adenosine(37) in tRNA + dimethylallyl diphosphate = N(6)-dimethylallyladenosine(37) in tRNA + diphosphate. Its function is as follows. Catalyzes the transfer of a dimethylallyl group onto the adenine at position 37 in tRNAs that read codons beginning with uridine, leading to the formation of N6-(dimethylallyl)adenosine (i(6)A). This is tRNA dimethylallyltransferase from Rickettsia bellii (strain OSU 85-389).